We begin with the raw amino-acid sequence, 59 residues long: Putative antitoxin AF_1090 (59 aa).

Belongs to the UPF0165 family.

Its function is as follows. Possibly the antitoxin component of a type II toxin-antitoxin (TA) system. This Archaeoglobus fulgidus (strain ATCC 49558 / DSM 4304 / JCM 9628 / NBRC 100126 / VC-16) protein is Putative antitoxin AF_1090.